We begin with the raw amino-acid sequence, 2094 residues long: Protein Ycf2 (2094 aa).

ATP is bound at residue 1385–1392 (GPPETGRS).

The protein belongs to the Ycf2 family.

The protein resides in the plastid. It localises to the chloroplast stroma. Functionally, probable ATPase of unknown function. Its presence in a non-photosynthetic plant (Epifagus virginiana) and experiments in tobacco indicate that it has an essential function which is probably not related to photosynthesis. The protein is Protein Ycf2 of Huperzia lucidula (Shining clubmoss).